A 263-amino-acid polypeptide reads, in one-letter code: 3-methyl-2-oxobutanoate hydroxymethyltransferase (263 aa).

Residues Asp45 and Asp84 each coordinate Mg(2+). 3-methyl-2-oxobutanoate contacts are provided by residues 45–46 (DS), Asp84, and Lys112. Glu114 is a binding site for Mg(2+). The active-site Proton acceptor is the Glu181.

It belongs to the PanB family. As to quaternary structure, homodecamer; pentamer of dimers. Requires Mg(2+) as cofactor.

It is found in the cytoplasm. The catalysed reaction is 3-methyl-2-oxobutanoate + (6R)-5,10-methylene-5,6,7,8-tetrahydrofolate + H2O = 2-dehydropantoate + (6S)-5,6,7,8-tetrahydrofolate. Its pathway is cofactor biosynthesis; (R)-pantothenate biosynthesis; (R)-pantoate from 3-methyl-2-oxobutanoate: step 1/2. Functionally, catalyzes the reversible reaction in which hydroxymethyl group from 5,10-methylenetetrahydrofolate is transferred onto alpha-ketoisovalerate to form ketopantoate. The polypeptide is 3-methyl-2-oxobutanoate hydroxymethyltransferase (Buchnera aphidicola subsp. Schizaphis graminum (strain Sg)).